The following is a 281-amino-acid chain: Urease accessory protein UreD (281 aa).

The protein belongs to the UreD family. As to quaternary structure, ureD, UreF and UreG form a complex that acts as a GTP-hydrolysis-dependent molecular chaperone, activating the urease apoprotein by helping to assemble the nickel containing metallocenter of UreC. The UreE protein probably delivers the nickel.

It localises to the cytoplasm. Functionally, required for maturation of urease via the functional incorporation of the urease nickel metallocenter. The protein is Urease accessory protein UreD of Pseudomonas savastanoi pv. phaseolicola (strain 1448A / Race 6) (Pseudomonas syringae pv. phaseolicola (strain 1448A / Race 6)).